The following is a 205-amino-acid chain: Urease accessory protein UreG (205 aa).

14-21 (GPVGSGKT) provides a ligand contact to GTP.

The protein belongs to the SIMIBI class G3E GTPase family. UreG subfamily. In terms of assembly, homodimer. UreD, UreF and UreG form a complex that acts as a GTP-hydrolysis-dependent molecular chaperone, activating the urease apoprotein by helping to assemble the nickel containing metallocenter of UreC. The UreE protein probably delivers the nickel.

Its subcellular location is the cytoplasm. In terms of biological role, facilitates the functional incorporation of the urease nickel metallocenter. This process requires GTP hydrolysis, probably effectuated by UreG. This Proteus mirabilis (strain HI4320) protein is Urease accessory protein UreG.